The following is a 215-amino-acid chain: Ribosomal RNA small subunit methyltransferase G (215 aa).

Residues G71, L76, and R135 each coordinate S-adenosyl-L-methionine.

The protein belongs to the methyltransferase superfamily. RNA methyltransferase RsmG family.

Its subcellular location is the cytoplasm. Functionally, specifically methylates the N7 position of a guanine in 16S rRNA. The polypeptide is Ribosomal RNA small subunit methyltransferase G (Salinibacter ruber (strain DSM 13855 / M31)).